Reading from the N-terminus, the 59-residue chain is Large ribosomal subunit protein bL33 (59 aa).

Belongs to the bacterial ribosomal protein bL33 family.

The chain is Large ribosomal subunit protein bL33 from Borreliella afzelii (strain PKo) (Borrelia afzelii).